The chain runs to 159 residues: RNA pyrophosphohydrolase (159 aa).

The Nudix hydrolase domain maps to 6–149 (GFRPNVGIIL…KREVYRRALK (144 aa)). Residues 38–59 (GGINARETPEEALFRELNEEVG) carry the Nudix box motif.

Belongs to the Nudix hydrolase family. RppH subfamily. A divalent metal cation is required as a cofactor.

Its function is as follows. Accelerates the degradation of transcripts by removing pyrophosphate from the 5'-end of triphosphorylated RNA, leading to a more labile monophosphorylated state that can stimulate subsequent ribonuclease cleavage. The chain is RNA pyrophosphohydrolase from Stutzerimonas stutzeri (strain A1501) (Pseudomonas stutzeri).